Reading from the N-terminus, the 1054-residue chain is Bifunctional cytochrome P450/NADPH--P450 reductase 2 (1054 aa).

Residues 1-475 form a cytochrome P450 region; it reads MKQASAIPQP…QADIKAETKP (475 aa). A heme-binding site is contributed by cysteine 403. A compositionally biased stretch (basic and acidic residues) spans 462–480; sequence QRKEQADIKAETKPKETKP. The segment at 462 to 482 is disordered; the sequence is QRKEQADIKAETKPKETKPKH. Residues 476–1053 form an NADPH--P450 reductase region; that stretch reads KETKPKHGTP…RRYVKDVWTG (578 aa). A Flavodoxin-like domain is found at 486 to 625; that stretch reads LLVLFGSNLG…HRESWENRFW (140 aa). Residues 492–497, 539–542, 573–575, and 581–583 each bind FMN; these read SNLGTA, SYNG, CGN, and TYQ. The FAD-binding FR-type domain maps to 663–896; it reads YGAFEGIVLE…RTPQSGFQMP (234 aa).

It in the N-terminal section; belongs to the cytochrome P450 family. Requires FAD as cofactor. FMN serves as cofactor. Heme b is required as a cofactor.

Its subcellular location is the cytoplasm. The catalysed reaction is an organic molecule + reduced [NADPH--hemoprotein reductase] + O2 = an alcohol + oxidized [NADPH--hemoprotein reductase] + H2O + H(+). It catalyses the reaction 2 oxidized [cytochrome P450] + NADPH = 2 reduced [cytochrome P450] + NADP(+) + H(+). Its function is as follows. Functions as a fatty acid monooxygenase. Catalyzes hydroxylation of a range of medium to long-chain fatty acids, with a preference for long-chain unsaturated and branched-chain fatty acids over saturated fatty acids. Hydroxylation of myristic acid occurs mainly at the omega-2 and omega-3 positions, in approximately equal proportions. Also displays a NADPH-dependent reductase activity in the C-terminal domain, which allows electron transfer from NADPH to the heme iron of the cytochrome P450 N-terminal domain. In Bacillus subtilis (strain 168), this protein is Bifunctional cytochrome P450/NADPH--P450 reductase 2.